The primary structure comprises 203 residues: dITP/XTP pyrophosphatase (203 aa).

Residue 8–13 (SNNAGK) participates in substrate binding. Positions 40 and 69 each coordinate Mg(2+). Asp-69 functions as the Proton acceptor in the catalytic mechanism. Substrate contacts are provided by residues Ser-70, 152-155 (FGYD), Lys-175, and 180-181 (HR).

This sequence belongs to the HAM1 NTPase family. In terms of assembly, homodimer. Requires Mg(2+) as cofactor.

It carries out the reaction XTP + H2O = XMP + diphosphate + H(+). It catalyses the reaction dITP + H2O = dIMP + diphosphate + H(+). The enzyme catalyses ITP + H2O = IMP + diphosphate + H(+). Functionally, pyrophosphatase that catalyzes the hydrolysis of nucleoside triphosphates to their monophosphate derivatives, with a high preference for the non-canonical purine nucleotides XTP (xanthosine triphosphate), dITP (deoxyinosine triphosphate) and ITP. Seems to function as a house-cleaning enzyme that removes non-canonical purine nucleotides from the nucleotide pool, thus preventing their incorporation into DNA/RNA and avoiding chromosomal lesions. The protein is dITP/XTP pyrophosphatase of Nitrosomonas europaea (strain ATCC 19718 / CIP 103999 / KCTC 2705 / NBRC 14298).